The following is a 543-amino-acid chain: Probable ubiquitin-conjugating enzyme E2 26 (543 aa).

The interval 1–21 is disordered; that stretch reads MEPDVVEIPPPPLIASGSRTR. One can recognise a UBC core domain in the interval 271 to 431; sequence NWVKKVQADW…VFLLSLKTMV (161 aa). Catalysis depends on cysteine 357, which acts as the Glycyl thioester intermediate. The tract at residues 514–543 is disordered; the sequence is LAEKPEPPMSNANTENQSKKKTRKRSRSSR. Positions 532–543 are enriched in basic residues; that stretch reads KKKTRKRSRSSR.

This sequence belongs to the ubiquitin-conjugating enzyme family.

It carries out the reaction S-ubiquitinyl-[E1 ubiquitin-activating enzyme]-L-cysteine + [E2 ubiquitin-conjugating enzyme]-L-cysteine = [E1 ubiquitin-activating enzyme]-L-cysteine + S-ubiquitinyl-[E2 ubiquitin-conjugating enzyme]-L-cysteine.. The protein operates within protein modification; protein ubiquitination. Its function is as follows. Accepts the ubiquitin from the E1 complex and catalyzes its covalent attachment to other proteins. The polypeptide is Probable ubiquitin-conjugating enzyme E2 26 (UBC26) (Arabidopsis thaliana (Mouse-ear cress)).